The sequence spans 304 residues: Porphobilinogen deaminase (304 aa).

An S-(dipyrrolylmethanemethyl)cysteine modification is found at C240.

It belongs to the HMBS family. As to quaternary structure, monomer. Dipyrromethane is required as a cofactor.

It catalyses the reaction 4 porphobilinogen + H2O = hydroxymethylbilane + 4 NH4(+). Its pathway is porphyrin-containing compound metabolism; protoporphyrin-IX biosynthesis; coproporphyrinogen-III from 5-aminolevulinate: step 2/4. Tetrapolymerization of the monopyrrole PBG into the hydroxymethylbilane pre-uroporphyrinogen in several discrete steps. This Xanthomonas campestris pv. campestris (strain B100) protein is Porphobilinogen deaminase.